A 115-amino-acid polypeptide reads, in one-letter code: NAD(P)H-quinone oxidoreductase subunit M (115 aa).

It belongs to the complex I NdhM subunit family. NDH-1 can be composed of about 15 different subunits; different subcomplexes with different compositions have been identified which probably have different functions.

The protein resides in the cellular thylakoid membrane. It catalyses the reaction a plastoquinone + NADH + (n+1) H(+)(in) = a plastoquinol + NAD(+) + n H(+)(out). The enzyme catalyses a plastoquinone + NADPH + (n+1) H(+)(in) = a plastoquinol + NADP(+) + n H(+)(out). Its function is as follows. NDH-1 shuttles electrons from an unknown electron donor, via FMN and iron-sulfur (Fe-S) centers, to quinones in the respiratory and/or the photosynthetic chain. The immediate electron acceptor for the enzyme in this species is believed to be plastoquinone. Couples the redox reaction to proton translocation, and thus conserves the redox energy in a proton gradient. Cyanobacterial NDH-1 also plays a role in inorganic carbon-concentration. This is NAD(P)H-quinone oxidoreductase subunit M from Prochlorococcus marinus (strain NATL2A).